Reading from the N-terminus, the 135-residue chain is MGYRKLGRTSSQRKALLRDLATDLIVFERIETTEARAKEIRKVVEKLITSGKKGDLHARRQAAAFIRHEVVEVVQVDAKGKDGSTVKKNRPVYALQKLFDDVAPRYAERQGGYTRILKKGPRRGDGAPMVIIELV.

The protein belongs to the bacterial ribosomal protein bL17 family. Part of the 50S ribosomal subunit. Contacts protein L32.

In Listeria monocytogenes serotype 4b (strain CLIP80459), this protein is Large ribosomal subunit protein bL17.